A 352-amino-acid chain; its full sequence is Beta-methylmalyl-CoA dehydratase (352 aa).

The 114-residue stretch at 16 to 129 (LGQTIVHATP…GKTGVVYVHS (114 aa)) folds into the MaoC-like domain. Substrate-binding positions include 62–65 (PIDS), 85–88 (IANL), and 96–98 (GAV).

In terms of assembly, homodimer.

The enzyme catalyses (2R,3S)-beta-methylmalyl-CoA = 2-methylfumaryl-CoA + H2O. Its function is as follows. Involved in the glyoxylate assimilation cycle used to regenerate acetyl-CoA and produce pyruvate as universal precursor for biosynthesis. Catalyzes the reversible dehydration of beta-methylmalyl-CoA ((2R,3S)-beta-methylmalyl-CoA) to yield mesaconyl-CoA (2-methylfumaryl-CoA). This Chloroflexus aurantiacus (strain ATCC 29366 / DSM 635 / J-10-fl) protein is Beta-methylmalyl-CoA dehydratase (mch).